The following is a 329-amino-acid chain: Glutamyl-Q tRNA(Asp) synthetase (329 aa).

Residues 8–12 and Glu44 contribute to the L-glutamate site; that span reads RLAPS. Positions 11-21 match the 'HIGH' region motif; that stretch reads PSPTGAQHLGN. Cys100, Cys102, Tyr129, and Cys133 together coordinate Zn(2+). L-glutamate is bound by residues Tyr196 and Arg214. The 'KMSKS' region signature appears at 252 to 256; the sequence is RLAKR. Lys255 provides a ligand contact to ATP.

This sequence belongs to the class-I aminoacyl-tRNA synthetase family. GluQ subfamily. Zn(2+) serves as cofactor.

Its function is as follows. Catalyzes the tRNA-independent activation of glutamate in presence of ATP and the subsequent transfer of glutamate onto a tRNA(Asp). Glutamate is transferred on the 2-amino-5-(4,5-dihydroxy-2-cyclopenten-1-yl) moiety of the queuosine in the wobble position of the QUC anticodon. This is Glutamyl-Q tRNA(Asp) synthetase from Rhodopirellula baltica (strain DSM 10527 / NCIMB 13988 / SH1).